We begin with the raw amino-acid sequence, 154 residues long: MTTTTTFKGVDPNSRNSSRVLRPPGGGSNFSLGFDEPTEQPVRKNKMASNIFGTPEENQASWAKSAGAKSSGGREDLESSGLQRRNSSEASSGDFLDLKGEGDIHENVDTDLPGSLGQSEEKPVPAAPVPSPVAPAPVPSRRNPPGGKSSLVLG.

M1 carries the post-translational modification N-acetylmethionine. Over residues 1 to 19 the composition is skewed to polar residues; that stretch reads MTTTTTFKGVDPNSRNSSR. Positions 1–154 are disordered; that stretch reads MTTTTTFKGV…PGGKSSLVLG (154 aa). An N-acetylthreonine; in Hematological and neurological expressed 1 protein, N-terminally processed modification is found at T2. 2 positions are modified to phosphoserine: S28 and S31. The span at 47–59 shows a compositional bias: polar residues; that stretch reads MASNIFGTPEENQ. T54 bears the Phosphothreonine mark. Over residues 60-71 the composition is skewed to low complexity; the sequence is ASWAKSAGAKSS. 5 positions are modified to phosphoserine: S71, S80, S87, S88, and S92. Residues 80–91 show a composition bias toward polar residues; that stretch reads SGLQRRNSSEAS. A compositionally biased stretch (basic and acidic residues) spans 96-108; that stretch reads LDLKGEGDIHENV. Over residues 125-138 the composition is skewed to pro residues; the sequence is PAAPVPSPVAPAPV. S131 carries the post-translational modification Phosphoserine. The residue at position 148 (K148) is an N6-acetyllysine.

This sequence belongs to the JUPITER family. In terms of assembly, interacts with the complex composed, at least, of APC, CTNNB1 and GSK3B; the interaction takes place with the inactive form of GSK3B (phosphorylated at 'Ser-9'). In terms of tissue distribution, expressed in testis, skeletal muscle, thymus, prostate, colon, peripheral blood cells, brain and placenta.

The protein localises to the nucleus. It localises to the cytoplasm. Modulates negatively AKT-mediated GSK3B signaling. Induces CTNNB1 'Ser-33' phosphorylation and degradation through the suppression of the inhibitory 'Ser-9' phosphorylation of GSK3B, which represses the function of the APC:CTNNB1:GSK3B complex and the interaction with CDH1/E-cadherin in adherent junctions. Plays a role in the regulation of cell cycle and cell adhesion. Has an inhibitory role on AR-signaling pathway through the induction of receptor proteasomal degradation. The polypeptide is Jupiter microtubule associated homolog 1 (Homo sapiens (Human)).